A 92-amino-acid polypeptide reads, in one-letter code: uncharacterized protein (92 aa).

The protein to M.jannaschii MJ0782.1.

This is an uncharacterized protein from Methanothermobacter thermautotrophicus (strain ATCC 29096 / DSM 1053 / JCM 10044 / NBRC 100330 / Delta H) (Methanobacterium thermoautotrophicum).